Consider the following 364-residue polypeptide: Dual-specificity RNA methyltransferase RlmN (364 aa).

Glu93 functions as the Proton acceptor in the catalytic mechanism. The Radical SAM core domain maps to 99 to 337 (EDDRGTLCIS…ATIRKTRGDD (239 aa)). Residues Cys106 and Cys342 are joined by a disulfide bond. Residues Cys113, Cys117, and Cys120 each coordinate [4Fe-4S] cluster. S-adenosyl-L-methionine-binding positions include 167-168 (GE), Ser199, 221-223 (SLH), and Asn299. Cys342 functions as the S-methylcysteine intermediate in the catalytic mechanism.

It belongs to the radical SAM superfamily. RlmN family. The cofactor is [4Fe-4S] cluster.

Its subcellular location is the cytoplasm. The enzyme catalyses adenosine(2503) in 23S rRNA + 2 reduced [2Fe-2S]-[ferredoxin] + 2 S-adenosyl-L-methionine = 2-methyladenosine(2503) in 23S rRNA + 5'-deoxyadenosine + L-methionine + 2 oxidized [2Fe-2S]-[ferredoxin] + S-adenosyl-L-homocysteine. It carries out the reaction adenosine(37) in tRNA + 2 reduced [2Fe-2S]-[ferredoxin] + 2 S-adenosyl-L-methionine = 2-methyladenosine(37) in tRNA + 5'-deoxyadenosine + L-methionine + 2 oxidized [2Fe-2S]-[ferredoxin] + S-adenosyl-L-homocysteine. Its function is as follows. Specifically methylates position 2 of adenine 2503 in 23S rRNA and position 2 of adenine 37 in tRNAs. m2A2503 modification seems to play a crucial role in the proofreading step occurring at the peptidyl transferase center and thus would serve to optimize ribosomal fidelity. This is Dual-specificity RNA methyltransferase RlmN from Dichelobacter nodosus (strain VCS1703A).